Here is a 334-residue protein sequence, read N- to C-terminus: Spermidine synthase 1 (334 aa).

The segment at 1 to 37 (MAAPENTLHSTDSPLKRQREDEVNGVSDTLSKEPQPN) is disordered. The span at 26–37 (VSDTLSKEPQPN) shows a compositional bias: polar residues. The region spanning 44–281 (PGWFSEISPM…GMIGFMLCST (238 aa)) is the PABS domain. Position 75 (Q75) interacts with S-adenosyl 3-(methylsulfanyl)propylamine. Y105 provides a ligand contact to putrescine. Residues Q106, D130, E150, 181 to 182 (DG), and D200 each bind S-adenosyl 3-(methylsulfanyl)propylamine. Catalysis depends on D200, which acts as the Proton acceptor. Putrescine-binding positions include 200–203 (DSSD) and Y269.

It belongs to the spermidine/spermine synthase family.

It catalyses the reaction S-adenosyl 3-(methylsulfanyl)propylamine + putrescine = S-methyl-5'-thioadenosine + spermidine + H(+). Its pathway is amine and polyamine biosynthesis; spermidine biosynthesis; spermidine from putrescine: step 1/1. The polypeptide is Spermidine synthase 1 (SPDSYN1) (Pisum sativum (Garden pea)).